We begin with the raw amino-acid sequence, 283 residues long: Formamidopyrimidine-DNA glycosylase (283 aa).

Pro2 functions as the Schiff-base intermediate with DNA in the catalytic mechanism. Glu3 serves as the catalytic Proton donor. The active-site Proton donor; for beta-elimination activity is the Lys58. DNA-binding residues include His100, Arg119, and Arg162. An FPG-type zinc finger spans residues 247–283 (DVYGREGEPCRRAGCTGTVTRITQSGRSSFYCGKCQR). The active-site Proton donor; for delta-elimination activity is Arg273.

Belongs to the FPG family. As to quaternary structure, monomer. Zn(2+) serves as cofactor.

The catalysed reaction is Hydrolysis of DNA containing ring-opened 7-methylguanine residues, releasing 2,6-diamino-4-hydroxy-5-(N-methyl)formamidopyrimidine.. The enzyme catalyses 2'-deoxyribonucleotide-(2'-deoxyribose 5'-phosphate)-2'-deoxyribonucleotide-DNA = a 3'-end 2'-deoxyribonucleotide-(2,3-dehydro-2,3-deoxyribose 5'-phosphate)-DNA + a 5'-end 5'-phospho-2'-deoxyribonucleoside-DNA + H(+). Involved in base excision repair of DNA damaged by oxidation or by mutagenic agents. Acts as a DNA glycosylase that recognizes and removes damaged bases. Has a preference for oxidized purines, such as 7,8-dihydro-8-oxoguanine (8-oxoG). Has AP (apurinic/apyrimidinic) lyase activity and introduces nicks in the DNA strand. Cleaves the DNA backbone by beta-delta elimination to generate a single-strand break at the site of the removed base with both 3'- and 5'-phosphates. The protein is Formamidopyrimidine-DNA glycosylase of Ruegeria sp. (strain TM1040) (Silicibacter sp.).